We begin with the raw amino-acid sequence, 303 residues long: DDRGK domain-containing protein 1 (303 aa).

Over 1-2 (MD) the chain is Lumenal. A helical transmembrane segment spans residues 3–23 (LILLIGIATALLIILLTLYFL). The Cytoplasmic segment spans residues 24–303 (QKRNAPAETK…TPVTASEGGA (280 aa)). 2 disordered regions span residues 31–53 (ETKA…VPRR) and 84–160 (AIDP…AEVE). Basic and acidic residues predominate over residues 106–160 (LDEKMGAKKRAKMEAKEQKRLQREQELHDREQRKVKEAKEEAERKQQDDLDAEVE).

Belongs to the DDRGK1 family. As to quaternary structure, interacts with Atg9; the interaction is transient.

Its subcellular location is the endoplasmic reticulum membrane. Its function is as follows. Substrate adapter for ufmylation, the covalent attachment of the ubiquitin-like modifier UFM1 to substrate proteins. Required for ufmylation of Atg9; protects the nervous system during aging, possibly by stabilizing Atg9 and supporting its function. This chain is DDRGK domain-containing protein 1, found in Drosophila grimshawi (Hawaiian fruit fly).